Here is a 182-residue protein sequence, read N- to C-terminus: MTHSWLLLTVLGCSAAMADSNNQALIDNAGKQYTGVLSVNQAAGNQHQQINSRAISLGGQASDALIQKLDGKVDPSLNASAAIQGSAFSNGNGILGVNQSAGANNQMINAVRISTGPQSVDDNVLSQQNMTLLPDSRSPSTTGSRQVVTSDQAFTGSRGVVQVNQSAGVGNRMANTLGVTIK.

Positions 1–18 are cleaved as a signal peptide; the sequence is MTHSWLLLTVLGCSAAMA. A FapB_R1 repeat occupies 22-58; it reads NQALIDNAGKQYTGVLSVNQAAGNQHQQINSRAISLG. A FapB_R2 repeat occupies 80 to 114; that stretch reads SAAIQGSAFSNGNGILGVNQSAGANNQMINAVRIS. The FapB_R3 repeat unit spans residues 150–180; that stretch reads SDQAFTGSRGVVQVNQSAGVGNRMANTLGVT.

It belongs to the FapB/FapC family. Forms fibrils in vitro; in the presence of FapA the fibrils are slightly narrower. A minor component of purified amyloid fibrils. Fibrils are resistant to boiling in 2% (weight/vol) SDS and require &gt;90% (vol/vol) formic acid to dissolve.

The protein resides in the fimbrium. Its subcellular location is the secreted. A minor component of the functional amyloid in this bacterium. Probably nucleates fibril formation; FapB nucleates fibrillation its own, FapA inhibits FapB fibril elongation. Upon overexpression of the endogenous six-gene locus (fapA-fapF) in situ, cells form large clumps during liquid growth, make large amounts of biofilm and produce amyloid fibrils. Expression of the 6 gene operon in E.coli strain BL21(DE3) induces flocculation and biofilm formation with copious extracellular fibrils. This Pseudomonas fluorescens protein is Functional amyloid subunit FapB.